The sequence spans 485 residues: Glutamyl-tRNA(Gln) amidotransferase subunit A (485 aa).

Residues Lys76 and Ser151 each act as charge relay system in the active site. The active-site Acyl-ester intermediate is the Ser175.

It belongs to the amidase family. GatA subfamily. As to quaternary structure, heterotrimer of A, B and C subunits.

It catalyses the reaction L-glutamyl-tRNA(Gln) + L-glutamine + ATP + H2O = L-glutaminyl-tRNA(Gln) + L-glutamate + ADP + phosphate + H(+). Allows the formation of correctly charged Gln-tRNA(Gln) through the transamidation of misacylated Glu-tRNA(Gln) in organisms which lack glutaminyl-tRNA synthetase. The reaction takes place in the presence of glutamine and ATP through an activated gamma-phospho-Glu-tRNA(Gln). The chain is Glutamyl-tRNA(Gln) amidotransferase subunit A from Chlorobium luteolum (strain DSM 273 / BCRC 81028 / 2530) (Pelodictyon luteolum).